The sequence spans 396 residues: MANKKKPSIKKSVNEPNPHLKQSHASGSQQSLGDSLIEYNQPESSIPVCYIQNYPQFSDSYLYEPPFILSKVNEEVGHTVVHFLCTGNYETLRTASEPGASKIGIEFRRSMLVYQAAKEYDLYDLETYAKKYIEVFGESMSIFDIMEAAREIYSKLPKDEIWLTGYIYKQLEIAFSLDRNIFQRVDFYDGVGKDPNFDKDVMRMVVNIYSEVLSRQLDETTPEGSIAEDGAAEDCAAEDGAVEDGVVEEGAVEEGAVEEGAVEDGAVKDGAVEDGAVENGVAEECGAAEDVADDGALKEAVNLGIPSQPSGTALSFEWDHWTSGSKMGASFSGNSQWKYEKDTNSLYPENKAEESGGFNAAYEGIKSKKKKDKKKKKSNKDKKVEELAEPVPECGR.

Disordered regions lie at residues 1 to 32 and 347 to 396; these read MANK…QQSL and YPEN…ECGR. Residues 23 to 32 show a composition bias toward polar residues; the sequence is SHASGSQQSL. Positions 367–380 are enriched in basic residues; that stretch reads SKKKKDKKKKKSNK.

Functionally, part of the subtelomeric hrmA-associated cluster (HAC) containing genes that alter the hyphal surface (such as reduced total chitin or increased beta-glucan exposure) and perturb inter-hyphal interactions within the developing biofilms, resulting in a loss of vertically aligned polarized growing filaments. Consequently, this hypoxia-typic morphotype (called H-MORPH) with altered biofilm architecture leads to increased hypoxia fitness, increased host inflammation, rapid disease progression, and mortality in a murine model of invasive aspergillosis. This is Subtelomeric hrmA-associated cluster protein AFUB_079040 from Aspergillus fumigatus (strain CBS 144.89 / FGSC A1163 / CEA10) (Neosartorya fumigata).